The primary structure comprises 40 residues: Auxin-responsive endogenous peptide 1 (40 aa).

The chain crosses the membrane as a helical span at residues 7–29 (LIYRLVVRCFLDYSICAPFYFYH).

Expressed in cotyledons, hypocotyls, roots, newly developing leaves and shoot apical meristem. Not detected in flowers, siliques or mature leaves.

The protein localises to the cytoplasm. The protein resides in the nucleus. Its subcellular location is the membrane. Functionally, negative regulator of the auxin response. The polypeptide is Auxin-responsive endogenous peptide 1 (Arabidopsis thaliana (Mouse-ear cress)).